The primary structure comprises 730 residues: Zinc finger protein 615 (730 aa).

The region spanning 7–78 (LTLEDVAVDF…EDEIYSRICF (72 aa)) is the KRAB domain. 19 C2H2-type zinc fingers span residues 203–225 (HVCSECGKAFLKLSQFIDHQRVH), 231–253 (HVCSMCGKAFSRKSRLMDHQRTH), 259–281 (YECTECDKTFLKKSQLNIHQKTH), 287–309 (YTCSECGKAFIKKCRLIYHQRTH), 315–337 (HGCSVCGKAFSTKFSLTTHQKTH), 343–365 (YICSECGKGFIEKRRLIAHHRTH), 371–393 (FICNKCGKGFTLKNSLITHQQTH), 399–421 (YTCSECGKGFSMKHCLMVHQRTH), 427–449 (YKCNECGKGFALKSPLIRHQRTH), 455–477 (YVCTECRKGFTMKSDLIVHQRTH), 483–505 (YICNDCGKGFTVKSRLIVHQRTH), 511–533 (YVCGECGKGFPAKIRLMGHQRTH), 539–561 (YICDECGKGFTEKSHLNVHRRTH), 567–589 (YVCSECGKGLTGKSMLIAHQRTH), 595–617 (YICNECGKGFTMKSTLSIHQQTH), 623–645 (YKCNECDKSFRKKTCLIQHQRFH), 651–673 (FACTECGKFSLRKNDLITHQRIH), 679–701 (YKCSDCGKAFTTKSGLNVHQRKH), and 707–729 (YGCSDCGKAFAHLSILVKHKRIH).

The protein belongs to the krueppel C2H2-type zinc-finger protein family.

It localises to the nucleus. Its function is as follows. May be involved in transcriptional regulation. This chain is Zinc finger protein 615 (ZNF615), found in Pongo abelii (Sumatran orangutan).